A 349-amino-acid chain; its full sequence is Glycine-rich cell wall structural protein (349 aa).

An N-terminal signal peptide occupies residues 1–23; the sequence is MGKVSFGFLGLMLVVVVIGVVEC.

It is found in the secreted. The protein localises to the cell wall. Functionally, responsible for plasticity of the cell wall. The chain is Glycine-rich cell wall structural protein from Arabidopsis thaliana (Mouse-ear cress).